The primary structure comprises 958 residues: MHTCCPPVTLEQDLHRKMHSWMLQTLAFAVTSLVLSCAETIDYYGEICDNACPCEEKDGILTVSCENRGIISLSEISPPRFPIYHLLLSGNLLNRLYPNEFVNYTGASILHLGSNVIQDIETGAFHGLRGLRRLHLNNNKLELLRDDTFLGLENLEYLQVDYNYISVIEPNAFGKLHLLQVLILNDNLLSSLPNNLFRFVPLTHLDLRGNRLKLLPYVGLLQHMDKVVELQLEENPWNCSCELISLKDWLDSISYSALVGDVVCETPFRLHGRDLDEVSKQELCPRRLISDYEMRPQTPLSTTGYLHTTPASVNSVATSSSAVYKPPLKPPKGTRQPNKPRVRPTSRQPSKDLGYSNYGPSIAYQTKSPVPLECPTACSCNLQISDLGLNVNCQERKIESIAELQPKPYNPKKMYLTENYIAVVRRTDFLEATGLDLLHLGNNRISMIQDRAFGDLTNLRRLYLNGNRIERLSPELFYGLQSLQYLFLQYNLIREIQSGTFDPVPNLQLLFLNNNLLQAMPSGVFSGLTLLRLNLRSNHFTSLPVSGVLDQLKSLIQIDLHDNPWDCTCDIVGMKLWVEQLKVGVLVDEVICKAPKKFAETDMRSIKSELLCPDYSDVVVSTPTPSSIQVPARTSAVTPAVRLNSTGAPASLGAGGGASSVPLSVLILSLLLVFIMSVFVAAGLFVLVMKRRKKNQSDHTSTNNSDVSSFNMQYSVYGGGGGTGGHPHAHVHHRGPALPKVKTPAGHVYEYIPHPLGHMCKNPIYRSREGNSVEDYKDLHELKVTYSSNHHLQQQQQPPPPPQQPQQQPPPQLQLQPGEEERRESHHLRSPAYSVSTIEPREDLLSPVQDADRFYRGILEPDKHCSTTPAGNSLPEYPKFPCSPAAYTFSPNYDLRRPHQYLHPGAGDSRLREPVLYSPPSAVFVEPNRNEYLELKAKLNVEPDYLEVLEKQTTFSQF.

The signal sequence occupies residues 1–40 (MHTCCPPVTLEQDLHRKMHSWMLQTLAFAVTSLVLSCAET). Over 41 to 664 (IDYYGEICDN…GGGASSVPLS (624 aa)) the chain is Extracellular. LRR repeat units lie at residues 82 to 103 (PIYH…EFVN), 106 to 127 (GASI…AFHG), 130 to 151 (GLRR…TFLG), 154 to 175 (NLEY…AFGK), 178 to 199 (LLQV…LFRF), and 201 to 222 (PLTH…GLLQ). Asparagine 103 is a glycosylation site (N-linked (GlcNAc...) asparagine). Residues 235 to 286 (NPWNCSCELISLKDWLDSISYSALVGDVVCETPFRLHGRDLDEVSKQELCPR) form the LRRCT 1 domain. The segment at 317–358 (ATSSSAVYKPPLKPPKGTRQPNKPRVRPTSRQPSKDLGYSNY) is disordered. In terms of domain architecture, LRRNT spans 365–407 (QTKSPVPLECPTACSCNLQISDLGLNVNCQERKIESIAELQPK). 6 LRR repeats span residues 410–431 (NPKK…DFLE), 434–455 (GLDL…AFGD), 458–479 (NLRR…LFYG), 482–503 (SLQY…TFDP), 506–527 (NLQL…VFSG), and 529–550 (TLLR…GVLD). In terms of domain architecture, LRRCT 2 spans 563–614 (NPWDCTCDIVGMKLWVEQLKVGVLVDEVICKAPKKFAETDMRSIKSELLCPD). N-linked (GlcNAc...) asparagine glycosylation occurs at asparagine 644. A helical transmembrane segment spans residues 665 to 685 (VLILSLLLVFIMSVFVAAGLF). Residues 686 to 958 (VLVMKRRKKN…LEKQTTFSQF (273 aa)) lie on the Cytoplasmic side of the membrane. Residues 789–844 (NHHLQQQQQPPPPPQQPQQQPPPQLQLQPGEEERRESHHLRSPAYSVSTIEPREDL) are disordered. Residues 797–812 (QPPPPPQQPQQQPPPQ) show a composition bias toward pro residues.

The protein belongs to the SLITRK family. Expressed predominantly in the cerebral cortex of the brain but also at low levels in the spinal cord and medulla.

It is found in the membrane. Suppresses neurite outgrowth. The chain is SLIT and NTRK-like protein 5 (SLITRK5) from Homo sapiens (Human).